The following is a 94-amino-acid chain: Co-chaperonin GroES (94 aa).

Belongs to the GroES chaperonin family. As to quaternary structure, heptamer of 7 subunits arranged in a ring. Interacts with the chaperonin GroEL.

Its subcellular location is the cytoplasm. Its function is as follows. Together with the chaperonin GroEL, plays an essential role in assisting protein folding. The GroEL-GroES system forms a nano-cage that allows encapsulation of the non-native substrate proteins and provides a physical environment optimized to promote and accelerate protein folding. GroES binds to the apical surface of the GroEL ring, thereby capping the opening of the GroEL channel. This Staphylococcus aureus (strain Mu50 / ATCC 700699) protein is Co-chaperonin GroES.